The sequence spans 239 residues: Ribonuclease P protein component 3 (239 aa).

This sequence belongs to the eukaryotic/archaeal RNase P protein component 3 family. In terms of assembly, consists of a catalytic RNA component and at least 4-5 protein subunits.

Its subcellular location is the cytoplasm. The enzyme catalyses Endonucleolytic cleavage of RNA, removing 5'-extranucleotides from tRNA precursor.. Part of ribonuclease P, a protein complex that generates mature tRNA molecules by cleaving their 5'-ends. This Methanosarcina acetivorans (strain ATCC 35395 / DSM 2834 / JCM 12185 / C2A) protein is Ribonuclease P protein component 3.